Reading from the N-terminus, the 1030-residue chain is Toll-like receptor 9 (1030 aa).

Residues 1-24 form the signal peptide; sequence MGPRCTLHPLSLLVQVTALAAALA. Residues 25-816 lie on the Extracellular side of the membrane; the sequence is QGRLPAFLPC…LCLDETLSWN (792 aa). A disulfide bridge connects residues C34 and C44. Position 46–50 (46–50) interacts with DNA; the sequence is WLFLK. LRR repeat units follow at residues 61 to 84, 86 to 109, 121 to 146, 149 to 165, 166 to 189, 197 to 220, 222 to 241, 242 to 267, 282 to 305, 307 to 331, 332 to 355, 362 to 385, 389 to 412, 414 to 439, 469 to 493, 495 to 518, 519 to 542, 544 to 571, 573 to 597, 599 to 621, 626 to 649, 651 to 674, 675 to 698, 700 to 722, 723 to 746, and 748 to 771; these read RANV…DFVH, SSLR…HFPC, VPTL…SLVS, LSRT…LTGL, HALR…ALEV, LGNL…LPPS, ETLL…DLAN, LTAL…CREC, LSRL…WFRG, DRLQ…AFQG, LARL…HLHL, LRSL…TLQP, LPML…IFGA, PGLL…TREV, CKAF…MFAR, SRLE…QFVP, LTSL…SFTE, PRLE…SFVA, LPAL…LCSA, LCAL…LYLR, LRSL…ALDN, PKSL…SLTL, LPKL…SLPS, TQLR…FFAL, AKQL…WFGS, and VGNL…TFVG. N-linked (GlcNAc...) asparagine glycosylation occurs at N63. DNA contacts are provided by residues 71 to 76 and 94 to 108; these read SNRIHH and KWNC…MHFP. C97 and C109 are oxidised to a cystine. N-linked (GlcNAc...) asparagine glycosylation is present at N128. DNA contacts are provided by residues Y131, R151, and 178–180; that span reads YYK. Cysteines 177 and 183 form a disulfide. An N-linked (GlcNAc...) asparagine glycan is attached at N199. Y207 serves as a coordination point for DNA. N209 and N241 each carry an N-linked (GlcNAc...) asparagine glycan. Cystine bridges form between C254/C267 and C257/C264. The S-palmitoyl cysteine moiety is linked to residue C257. Residue R261 coordinates DNA. C264 is lipidated: S-palmitoyl cysteine. Residue N339 is glycosylated (N-linked (GlcNAc...) asparagine). The cysteines at positions 469 and 499 are disulfide-linked. N512 is a glycosylation site (N-linked (GlcNAc...) asparagine). N-linked (GlcNAc...) asparagine glycosylation occurs at N566. N-linked (GlcNAc...) asparagine glycans are attached at residues N668 and N693. Residue N730 is glycosylated (N-linked (GlcNAc...) asparagine). Cystine bridges form between C763/C789 and C765/C808. The helical transmembrane segment at 817–837 threads the bilayer; it reads CFGISLLAMALGLVVPMLHHL. At 838 to 1030 the chain is on the cytoplasmic side; it reads CGWDLWYCFH…NFCRGPTTAE (193 aa). Residues 865-1010 enclose the TIR domain; it reads LFYDAFVVFD…SFWAQLGTAL (146 aa).

This sequence belongs to the Toll-like receptor family. As to quaternary structure, monomer and homodimer. Exists as a monomer in the absence of unmethylated cytidine-phosphate-guanosine (CpG) ligand. Proteolytic processing of an insertion loop (Z-loop) is required for homodimerization upon binding to the unmethylated CpG ligand leading to its activation. Interacts with MYD88 via their respective TIR domains. Interacts with BTK. Interacts (via transmembrane domain) with UNC93B1. Interacts with CD300LH; the interaction may promote full activation of TLR9-triggered innate responses. Interacts with CNPY3 and HSP90B1; this interaction is required for proper folding in the endoplasmic reticulum. Interacts with SMPDL3B. Interacts with CD82; this interaction is essential for TLR9-dependent myddosome formation in response to CpG stimulation. Post-translationally, activated by proteolytic cleavage of the flexible loop between repeats LRR14 and LRR15 within the ectodomain. Cleavage requires UNC93B1. Proteolytically processed by first removing the majority of the ectodomain by either asparagine endopeptidase (AEP) or a cathepsin followed by a trimming event that is solely cathepsin mediated and required for optimal receptor signaling. In terms of processing, palmitoylated by ZDHHC3 in the Golgi regulates TLR9 trafficking from the Golgi to endosomes. Depalmitoylation by PPT1 controls the release of TLR9 from UNC93B1 in endosomes.

The protein resides in the endoplasmic reticulum membrane. Its subcellular location is the endosome. It localises to the lysosome. It is found in the cytoplasmic vesicle. The protein localises to the phagosome. Key component of innate and adaptive immunity. TLRs (Toll-like receptors) control host immune response against pathogens through recognition of molecular patterns specific to microorganisms. TLR9 is a nucleotide-sensing TLR which is activated by unmethylated cytidine-phosphate-guanosine (CpG) dinucleotides. Acts via MYD88 and TRAF6, leading to NF-kappa-B activation, cytokine secretion and the inflammatory response. Upon CpG stimulation, induces B-cell proliferation, activation, survival and antibody production. This is Toll-like receptor 9 (TLR9) from Sus scrofa (Pig).